The sequence spans 227 residues: Probable methylthioribulose-1-phosphate dehydratase (227 aa).

C87 contributes to the substrate binding site. The Zn(2+) site is built by H105 and H107. E129 (proton donor/acceptor) is an active-site residue. H185 is a binding site for Zn(2+).

It belongs to the aldolase class II family. MtnB subfamily. It depends on Zn(2+) as a cofactor.

The protein resides in the cytoplasm. The enzyme catalyses 5-(methylsulfanyl)-D-ribulose 1-phosphate = 5-methylsulfanyl-2,3-dioxopentyl phosphate + H2O. It functions in the pathway amino-acid biosynthesis; L-methionine biosynthesis via salvage pathway; L-methionine from S-methyl-5-thio-alpha-D-ribose 1-phosphate: step 2/6. Catalyzes the dehydration of methylthioribulose-1-phosphate (MTRu-1-P) into 2,3-diketo-5-methylthiopentyl-1-phosphate (DK-MTP-1-P). This Drosophila mojavensis (Fruit fly) protein is Probable methylthioribulose-1-phosphate dehydratase.